The following is a 274-amino-acid chain: Ubiquinone biosynthesis O-methyltransferase, mitochondrial (274 aa).

Residues methionine 1–asparagine 30 constitute a mitochondrion transit peptide. Arginine 65, glycine 88, aspartate 109, and methionine 154 together coordinate S-adenosyl-L-methionine. Residues glutamate 155, glutamate 158, and histidine 159 each coordinate Mg(2+).

The protein belongs to the class I-like SAM-binding methyltransferase superfamily. UbiG/COQ3 family. As to quaternary structure, component of a multi-subunit COQ enzyme complex, composed of at least coq3, coq4, coq5, coq6, coq7 and coq9. Requires Mg(2+) as cofactor.

It localises to the mitochondrion inner membrane. It carries out the reaction 3,4-dihydroxy-5-(all-trans-decaprenyl)benzoate + S-adenosyl-L-methionine = 4-hydroxy-3-methoxy-5-(all-trans-decaprenyl)benzoate + S-adenosyl-L-homocysteine + H(+). It catalyses the reaction a 3-demethylubiquinone + S-adenosyl-L-methionine = a ubiquinone + S-adenosyl-L-homocysteine. The enzyme catalyses 3-demethylubiquinol-10 + S-adenosyl-L-methionine = ubiquinol-10 + S-adenosyl-L-homocysteine + H(+). The protein operates within cofactor biosynthesis; ubiquinone biosynthesis. Functionally, O-methyltransferase required for two non-consecutive steps during ubiquinone biosynthesis. Catalyzes the 2 O-methylation of 3,4-dihydroxy-5-(all-trans-decaprenyl)benzoic acid into 4-hydroxy-3-methoxy-5-(all-trans-decaprenyl)benzoic acid. Also catalyzes the last step of ubiquinone biosynthesis by mediating methylation of 3-demethylubiquinone into ubiquinone. Also able to mediate the methylation of 3-demethylubiquinol-10 into ubiquinol-10. The polypeptide is Ubiquinone biosynthesis O-methyltransferase, mitochondrial (Schizosaccharomyces pombe (strain 972 / ATCC 24843) (Fission yeast)).